Consider the following 1221-residue polypeptide: Fibulin-2 (1221 aa).

The signal sequence occupies residues 1 to 26 (MLLQESAGVWLALALVTALTPSPSMA). A subdomain NA (Cys-rich) region spans residues 27-176 (VPWQDCTGAE…ELICYQLPGC (150 aa)). The tract at residues 27 to 434 (VPWQDCTGAE…DGSTKDLIET (408 aa)) is n. Residues 177-434 (HGNFSDAEEG…DGSTKDLIET (258 aa)) are subdomain NB (Cys-free). Asn-179 carries N-linked (GlcNAc...) asparagine glycosylation. 2 disordered regions span residues 248–329 (PTAA…LIPD) and 341–399 (GAAP…PQHP). Acidic residues predominate over residues 270–283 (DTEEDEEEEEEETL). Positions 312–322 (QEKEAEAKAGP) are enriched in basic and acidic residues. Residues 421–423 (RGD) carry the Cell attachment site motif. 11 cysteine pairs are disulfide-bonded: Cys-435–Cys-462, Cys-436–Cys-469, Cys-449–Cys-470, Cys-479–Cys-508, Cys-492–Cys-509, Cys-511–Cys-535, Cys-512–Cys-542, Cys-525–Cys-543, Cys-598–Cys-610, Cys-606–Cys-619, and Cys-621–Cys-634. 3 Anaphylatoxin-like domains span residues 435 to 477 (CCAA…LKEK), 478 to 510 (SCVA…QCCD), and 511 to 543 (CCGL…LSCC). A glycan (N-linked (GlcNAc...) asparagine) is linked at Asn-497. In terms of domain architecture, EGF-like 1; calcium-binding spans 594–635 (DQDECLMLPGELCQHLCINTVGSYRCACFPGFELQGDGRTCR). The interval 633–661 (TCRPDRGAPQLDTARESAPRSESAQVSPN) is disordered. Residues 652–661 (RSESAQVSPN) show a composition bias toward polar residues. The 40-residue stretch at 669–708 (QPNTCKDNGPCRQVCRVVGDTAMCSCFPGYAIMADGVSCE) folds into the EGF-like 2 domain. 5 disulfides stabilise this stretch: Cys-673–Cys-683, Cys-679–Cys-692, Cys-694–Cys-707, Cys-713–Cys-726, and Cys-720–Cys-735. The region spanning 709–755 (DQDECLMGTHDCSWKQFCVNTLGSFYCVNHTVLCAEGYILNAHRKCV) is the EGF-like 3; calcium-binding domain. N-linked (GlcNAc...) asparagine glycosylation occurs at Asn-737. Cys-742 and Cys-754 form a disulfide bridge. The 45-residue stretch at 756–800 (DINECVTDLHTCTRAEHCVNTPGSFQCYKALTCEPGYVLTDGECT) folds into the EGF-like 4; calcium-binding domain. The 46-residue stretch at 801–846 (DVDECVTGTHNCQAGFSCQNTKGSFYCQARQRCMDGFLQDPEGNCV) folds into the EGF-like 5; calcium-binding domain. 3 cysteine pairs are disulfide-bonded: Cys-805-Cys-818, Cys-812-Cys-827, and Cys-833-Cys-845. Positions 847–894 (DINECTSLLEPCRSGFSCINTVGSYTCQRNPLVCGRGYHANEEGSECV) constitute an EGF-like 6; calcium-binding domain. An EGF-like 7; calcium-binding domain is found at 895-937 (DVNECETGVHRCGEGQLCYNLPGSYRCDCKPGFQRDAFGRTCI). Disulfide bonds link Cys-899–Cys-912, Cys-906–Cys-921, Cys-923–Cys-936, Cys-942–Cys-954, Cys-950–Cys-963, Cys-965–Cys-978, Cys-984–Cys-993, Cys-989–Cys-1002, Cys-1004–Cys-1017, Cys-1023–Cys-1035, Cys-1031–Cys-1044, Cys-1046–Cys-1060, Cys-1066–Cys-1079, Cys-1073–Cys-1088, and Cys-1093–Cys-1105. The region spanning 938–979 (DVNECWVSPGRLCQHTCENTPGSYRCSCAAGFLLAADGKHCE) is the EGF-like 8; calcium-binding domain. Residues 980-1018 (DVNECETRRCSQECANIYGSYQCYCRQGYQLAEDGHTCT) enclose the EGF-like 9; calcium-binding domain. Positions 1019–1061 (DIDECAQGAGILCTFRCVNVPGSYQCACPEQGYTMMANGRSCK) constitute an EGF-like 10; calcium-binding domain. An EGF-like 11; calcium-binding domain is found at 1062–1106 (DLDECALGTHNCSEAETCHNIQGSFRCLRFDCPPNYVRVSETKCE). Asn-1072 carries an N-linked (GlcNAc...) asparagine glycan. The tract at residues 1111 to 1221 (QDITECQTSP…MYIFFTTFAP (111 aa)) is domain III.

It belongs to the fibulin family. In terms of assembly, homotrimer; disulfide-linked. Interacts with LAMA2. Interacts with FBN1 (via N-terminal domain). Forms a ternary complex with ELN and FBN1. In terms of tissue distribution, component of both basement membranes and other connective tissues.

The protein resides in the secreted. It localises to the extracellular space. It is found in the extracellular matrix. Its function is as follows. Its binding to fibronectin and some other ligands is calcium dependent. May act as an adapter that mediates the interaction between FBN1 and ELN. This is Fibulin-2 (Fbln2) from Mus musculus (Mouse).